The chain runs to 152 residues: Endoribonuclease YbeY (152 aa).

Zn(2+)-binding residues include H111, H115, and H121.

It belongs to the endoribonuclease YbeY family. It depends on Zn(2+) as a cofactor.

The protein localises to the cytoplasm. Single strand-specific metallo-endoribonuclease involved in late-stage 70S ribosome quality control and in maturation of the 3' terminus of the 16S rRNA. This Pseudomonas fluorescens (strain ATCC BAA-477 / NRRL B-23932 / Pf-5) protein is Endoribonuclease YbeY.